The sequence spans 570 residues: Phosphoenolpyruvate-protein phosphotransferase (570 aa).

The active-site Tele-phosphohistidine intermediate is His-189. Phosphoenolpyruvate-binding residues include Arg-296 and Arg-332. The Mg(2+) site is built by Glu-431 and Asp-455. Residues 454–455 (ND) and Arg-465 each bind phosphoenolpyruvate. Cys-502 functions as the Proton donor in the catalytic mechanism.

The protein belongs to the PEP-utilizing enzyme family. Homodimer. Interacts with FloT. Mg(2+) serves as cofactor.

It is found in the cytoplasm. The protein resides in the membrane raft. It catalyses the reaction L-histidyl-[protein] + phosphoenolpyruvate = N(pros)-phospho-L-histidyl-[protein] + pyruvate. Functionally, general (non sugar-specific) component of the phosphoenolpyruvate-dependent sugar phosphotransferase system (sugar PTS). This major carbohydrate active-transport system catalyzes the phosphorylation of incoming sugar substrates concomitantly with their translocation across the cell membrane. Enzyme I transfers the phosphoryl group from phosphoenolpyruvate (PEP) to the phosphoryl carrier protein (HPr). This is Phosphoenolpyruvate-protein phosphotransferase (ptsI) from Bacillus subtilis (strain 168).